A 160-amino-acid chain; its full sequence is Cytochrome b6-f complex subunit 4 (160 aa).

A run of 3 helical transmembrane segments spans residues 36–56 (LLYI…GLSV), 95–115 (LLGV…PFIE), and 131–151 (TVFL…ALPI).

Belongs to the cytochrome b family. PetD subfamily. As to quaternary structure, the 4 large subunits of the cytochrome b6-f complex are cytochrome b6, subunit IV (17 kDa polypeptide, petD), cytochrome f and the Rieske protein, while the 4 small subunits are petG, petL, petM and petN. The complex functions as a dimer.

The protein resides in the plastid. Its subcellular location is the chloroplast thylakoid membrane. Its function is as follows. Component of the cytochrome b6-f complex, which mediates electron transfer between photosystem II (PSII) and photosystem I (PSI), cyclic electron flow around PSI, and state transitions. In Chaetosphaeridium globosum (Charophycean green alga), this protein is Cytochrome b6-f complex subunit 4.